Here is a 232-residue protein sequence, read N- to C-terminus: MTAPDSSSAPAPLAFGGKPRVYPMRLYGDPILRRKARNLTAADTLHVPGFEPQTVREVADTMLETMFEERGVGLAAPQIGLPVRMFVAVEYADDEEENEGQETPLRSRVLREYVMLNPVVKVINKKKDKSYQEGCLSIPGIYEDGVPRARQVRVDYTDLDGQPRSIEAEDYLARVFQHETDHLDGKLFLDHLPADITEDHRKDLLRIQQASKNFLAQLSEWDKAQRHLKENL.

Residues C135 and H178 each coordinate Fe cation. The active site involves E179. H182 is a Fe cation binding site.

The protein belongs to the polypeptide deformylase family. The cofactor is Fe(2+).

The catalysed reaction is N-terminal N-formyl-L-methionyl-[peptide] + H2O = N-terminal L-methionyl-[peptide] + formate. Removes the formyl group from the N-terminal Met of newly synthesized proteins. Requires at least a dipeptide for an efficient rate of reaction. N-terminal L-methionine is a prerequisite for activity but the enzyme has broad specificity at other positions. This is Peptide deformylase from Deinococcus radiodurans (strain ATCC 13939 / DSM 20539 / JCM 16871 / CCUG 27074 / LMG 4051 / NBRC 15346 / NCIMB 9279 / VKM B-1422 / R1).